The primary structure comprises 236 residues: Pyridoxal 5'-phosphate synthase subunit PdxT (236 aa).

61 to 63 (GES) provides a ligand contact to L-glutamine. The Nucleophile role is filled by cysteine 93. Residues arginine 127 and 163–164 (IR) each bind L-glutamine. Residues histidine 215 and glutamate 217 each act as charge relay system in the active site.

The protein belongs to the glutaminase PdxT/SNO family. As to quaternary structure, in the presence of PdxS, forms a dodecamer of heterodimers. Only shows activity in the heterodimer.

The catalysed reaction is aldehydo-D-ribose 5-phosphate + D-glyceraldehyde 3-phosphate + L-glutamine = pyridoxal 5'-phosphate + L-glutamate + phosphate + 3 H2O + H(+). It carries out the reaction L-glutamine + H2O = L-glutamate + NH4(+). It participates in cofactor biosynthesis; pyridoxal 5'-phosphate biosynthesis. Its function is as follows. Catalyzes the hydrolysis of glutamine to glutamate and ammonia as part of the biosynthesis of pyridoxal 5'-phosphate. The resulting ammonia molecule is channeled to the active site of PdxS. This is Pyridoxal 5'-phosphate synthase subunit PdxT from Pseudarthrobacter chlorophenolicus (strain ATCC 700700 / DSM 12829 / CIP 107037 / JCM 12360 / KCTC 9906 / NCIMB 13794 / A6) (Arthrobacter chlorophenolicus).